A 1185-amino-acid polypeptide reads, in one-letter code: DNA-directed RNA polymerase subunit beta' (1185 aa).

Residues C67, C69, C82, and C85 each coordinate Zn(2+). 3 residues coordinate Mg(2+): D457, D459, and D461. Positions 802, 876, 883, and 886 each coordinate Zn(2+).

The protein belongs to the RNA polymerase beta' chain family. The RNAP catalytic core consists of 2 alpha, 1 beta, 1 beta' and 1 omega subunit. When a sigma factor is associated with the core the holoenzyme is formed, which can initiate transcription. It depends on Mg(2+) as a cofactor. The cofactor is Zn(2+).

It carries out the reaction RNA(n) + a ribonucleoside 5'-triphosphate = RNA(n+1) + diphosphate. Functionally, DNA-dependent RNA polymerase catalyzes the transcription of DNA into RNA using the four ribonucleoside triphosphates as substrates. The sequence is that of DNA-directed RNA polymerase subunit beta' from Clostridium novyi (strain NT).